A 296-amino-acid polypeptide reads, in one-letter code: Lipoyl synthase (296 aa).

Cys38, Cys43, Cys49, Cys64, Cys68, Cys71, and Ser279 together coordinate [4Fe-4S] cluster. The region spanning 50 to 268 (WDGGCLTFMV…AEYGRSLGFK (219 aa)) is the Radical SAM core domain.

The protein belongs to the radical SAM superfamily. Lipoyl synthase family. [4Fe-4S] cluster is required as a cofactor.

It is found in the cytoplasm. It carries out the reaction [[Fe-S] cluster scaffold protein carrying a second [4Fe-4S](2+) cluster] + N(6)-octanoyl-L-lysyl-[protein] + 2 oxidized [2Fe-2S]-[ferredoxin] + 2 S-adenosyl-L-methionine + 4 H(+) = [[Fe-S] cluster scaffold protein] + N(6)-[(R)-dihydrolipoyl]-L-lysyl-[protein] + 4 Fe(3+) + 2 hydrogen sulfide + 2 5'-deoxyadenosine + 2 L-methionine + 2 reduced [2Fe-2S]-[ferredoxin]. Its pathway is protein modification; protein lipoylation via endogenous pathway; protein N(6)-(lipoyl)lysine from octanoyl-[acyl-carrier-protein]: step 2/2. Functionally, catalyzes the radical-mediated insertion of two sulfur atoms into the C-6 and C-8 positions of the octanoyl moiety bound to the lipoyl domains of lipoate-dependent enzymes, thereby converting the octanoylated domains into lipoylated derivatives. The chain is Lipoyl synthase from Methanocella arvoryzae (strain DSM 22066 / NBRC 105507 / MRE50).